The following is a 379-amino-acid chain: RNA-splicing ligase RtcB2 (379 aa).

Mn(2+) is bound by residues Asp-74, Cys-77, His-137, His-168, and His-239. 136–140 contacts GMP; the sequence is NHFVE. Residues 239-240, Ser-277, 294-297, and Lys-372 each bind GMP; these read HN and HGAG. Catalysis depends on His-294, which acts as the GMP-histidine intermediate.

The protein belongs to the RtcB family. RtcB2 subfamily. Requires Mn(2+) as cofactor.

The catalysed reaction is a 3'-end 3'-phospho-ribonucleotide-RNA + a 5'-end dephospho-ribonucleoside-RNA + GTP = a ribonucleotidyl-ribonucleotide-RNA + GMP + diphosphate. GTP-dependent RNA ligase involved in rRNA repair. Repairs damaged 16S rRNA in 30S subunits that has been cleaved between adenine-1493 and guanosine-1494 (E.coli nubering). This specific cleavage is inflicted by CdiA (ECL_04451) or by colicin E3-type (ColE3) proteins. Poorly repairs damaged rRNA in the 70S ribosome; addition of release factor PrfH improves repair about 3-fold in vitro, probably because PrfH hydrolyzes the nascent chain allowing ribosomal subunit dissociation. In vivo the PrfH-RtcB2 pair restores growth in the presence of ribotoxins that specifically create this damage. Does not repair damaged tRNA (tested with tRNA(Asp) and tRNA(Arg)). This is RNA-splicing ligase RtcB2 from Escherichia coli (strain ATCC 25922 / DSM 1103 / LMG 8223 / NCIMB 12210 / NCTC 12241 / WDCM 00013 / Seattle 1946).